We begin with the raw amino-acid sequence, 229 residues long: Potassium/proton antiporter CemA (229 aa).

Transmembrane regions (helical) follow at residues 6-26, 114-134, and 189-209; these read AFIP…ISLS, ILCF…LLII, and IISG…KYWI.

It belongs to the CemA family.

Its subcellular location is the plastid. The protein resides in the chloroplast inner membrane. It catalyses the reaction K(+)(in) + H(+)(out) = K(+)(out) + H(+)(in). Functionally, contributes to K(+)/H(+) antiport activity by supporting proton efflux to control proton extrusion and homeostasis in chloroplasts in a light-dependent manner to modulate photosynthesis. Prevents excessive induction of non-photochemical quenching (NPQ) under continuous-light conditions. Indirectly promotes efficient inorganic carbon uptake into chloroplasts. In Carica papaya (Papaya), this protein is Potassium/proton antiporter CemA.